Reading from the N-terminus, the 314-residue chain is Mitochondrial 2-oxoglutarate/malate carrier protein (314 aa).

The residue at position 2 (A2) is an N-acetylalanine. A Phosphoserine modification is found at S6. 3 Solcar repeats span residues 23-108, 117-208, and 217-306; these read VKFL…LFER, PGFL…SKQF, and DNIL…MNKA. A helical membrane pass occupies residues 24 to 42; that stretch reads KFLFGGLAGMGATVFVQPL. K57 is modified (N6-succinyllysine). The helical transmembrane segment at 83 to 101 threads the bilayer; it reads GLSAGLLRQATYTTTRLGI. Phosphotyrosine is present on Y102. Helical transmembrane passes span 119 to 140, 183 to 202, and 222 to 240; these read FLLK…GTPA, GCIP…LASY, and HFCA…SMPV. At K256 the chain carries N6-acetyllysine. The chain crosses the membrane as a helical span at residues 281-300; that stretch reads GFTPYYARLGPHTVLTFIFL.

Belongs to the mitochondrial carrier (TC 2.A.29) family. As to quaternary structure, interacts with SMIM26. Post-translationally, the N-terminus is blocked. In terms of tissue distribution, heart, liver and brain.

It is found in the mitochondrion inner membrane. The catalysed reaction is (S)-malate(in) + 2-oxoglutarate(out) = (S)-malate(out) + 2-oxoglutarate(in). It catalyses the reaction malonate(in) + 2-oxoglutarate(out) = malonate(out) + 2-oxoglutarate(in). The enzyme catalyses succinate(in) + 2-oxoglutarate(out) = succinate(out) + 2-oxoglutarate(in). It carries out the reaction maleate(in) + 2-oxoglutarate(out) = maleate(out) + 2-oxoglutarate(in). The catalysed reaction is oxaloacetate(in) + 2-oxoglutarate(out) = oxaloacetate(out) + 2-oxoglutarate(in). Its function is as follows. Catalyzes the transport of 2-oxoglutarate (alpha-oxoglutarate) across the inner mitochondrial membrane in an electroneutral exchange for malate. Can also exchange 2-oxoglutarate for other dicarboxylic acids such as malonate, succinate, maleate and oxaloacetate, although with lower affinity. Contributes to several metabolic processes, including the malate-aspartate shuttle, the oxoglutarate/isocitrate shuttle, in gluconeogenesis from lactate, and in nitrogen metabolism. Maintains mitochondrial fusion and fission events, and the organization and morphology of cristae. Involved in the regulation of apoptosis. Helps protect from cytotoxic-induced apoptosis by modulating glutathione levels in mitochondria. The protein is Mitochondrial 2-oxoglutarate/malate carrier protein (SLC25A11) of Bos taurus (Bovine).